The chain runs to 265 residues: Urease accessory protein UreH (265 aa).

The protein belongs to the UreD family. UreH, UreF and UreG form a complex that acts as a GTP-hydrolysis-dependent molecular chaperone, activating the urease apoprotein by helping to assemble the nickel containing metallocenter of UreC. The UreE protein probably delivers the nickel.

Its subcellular location is the cytoplasm. Functionally, required for maturation of urease via the functional incorporation of the urease nickel metallocenter. In Helicobacter pylori (strain P12), this protein is Urease accessory protein UreH.